The following is a 103-amino-acid chain: Small ribosomal subunit protein uS10 (103 aa).

Belongs to the universal ribosomal protein uS10 family. In terms of assembly, part of the 30S ribosomal subunit.

Functionally, involved in the binding of tRNA to the ribosomes. This Pectobacterium atrosepticum (strain SCRI 1043 / ATCC BAA-672) (Erwinia carotovora subsp. atroseptica) protein is Small ribosomal subunit protein uS10.